The primary structure comprises 400 residues: Inosine-5'-monophosphate dehydrogenase (400 aa).

Basic and acidic residues predominate over residues Lys96–Lys116. The tract at residues Lys96–Ser125 is disordered. Residues Asp163 and Gly212–Gly214 each bind NAD(+). K(+) is bound by residues Gly214 and Gly216. Ser217 contributes to the IMP binding site. A K(+)-binding site is contributed by Cys219. Cys219 acts as the Thioimidate intermediate in catalysis. IMP contacts are provided by residues Asp252–Gly254, Gly275–Ser276, and Tyr299–Gly303. Arg315 acts as the Proton acceptor in catalysis. Glu329 serves as a coordination point for IMP. K(+)-binding residues include Glu383, Ser384, and His385.

The protein belongs to the IMPDH/GMPR family. In terms of assembly, homotetramer. K(+) is required as a cofactor.

The protein resides in the cytoplasm. It carries out the reaction IMP + NAD(+) + H2O = XMP + NADH + H(+). It participates in purine metabolism; XMP biosynthesis via de novo pathway; XMP from IMP: step 1/1. Its activity is regulated as follows. Mycophenolic acid (MPA) is a non-competitive inhibitor that prevents formation of the closed enzyme conformation by binding to the same site as the amobile flap. In contrast, mizoribine monophosphate (MZP) is a competitive inhibitor that induces the closed conformation. MPA is a potent inhibitor of mammalian IMPDHs but a poor inhibitor of the bacterial enzymes. MZP is a more potent inhibitor of bacterial IMPDH. Resistant to mycophenolic acid (MPA) inhibition. Catalyzes the conversion of inosine 5'-phosphate (IMP) to xanthosine 5'-phosphate (XMP), the first committed and rate-limiting step in the de novo synthesis of guanine nucleotides, and therefore plays an important role in the regulation of cell growth. This is Inosine-5'-monophosphate dehydrogenase from Cryptosporidium parvum.